Reading from the N-terminus, the 380-residue chain is Cytochrome b (380 aa).

The next 4 membrane-spanning stretches (helical) occupy residues 34–54 (FGSL…LLAM), 78–99 (WLIR…YLHI), 114–134 (WNTG…GYVL), and 179–199 (FFAL…IHLT). Heme b-binding residues include H84 and H98. Heme b is bound by residues H183 and H197. H202 lines the a ubiquinone pocket. 4 consecutive transmembrane segments (helical) span residues 227–247 (TKDT…ALFS), 289–309 (LGGV…PLLH), 321–341 (LSQL…WIGS), and 348–368 (FIII…ILFP).

The protein belongs to the cytochrome b family. As to quaternary structure, the cytochrome bc1 complex contains 11 subunits: 3 respiratory subunits (MT-CYB, CYC1 and UQCRFS1), 2 core proteins (UQCRC1 and UQCRC2) and 6 low-molecular weight proteins (UQCRH/QCR6, UQCRB/QCR7, UQCRQ/QCR8, UQCR10/QCR9, UQCR11/QCR10 and a cleavage product of UQCRFS1). This cytochrome bc1 complex then forms a dimer. It depends on heme b as a cofactor.

The protein localises to the mitochondrion inner membrane. In terms of biological role, component of the ubiquinol-cytochrome c reductase complex (complex III or cytochrome b-c1 complex) that is part of the mitochondrial respiratory chain. The b-c1 complex mediates electron transfer from ubiquinol to cytochrome c. Contributes to the generation of a proton gradient across the mitochondrial membrane that is then used for ATP synthesis. The polypeptide is Cytochrome b (MT-CYB) (Aptenodytes patagonicus (King penguin)).